The primary structure comprises 264 residues: Apolipoprotein A-I (264 aa).

The first 18 residues, 1-18 (MKAVVLAVAVLFLTGSQA), serve as a signal peptide directing secretion. Repeat copies occupy residues 67 to 88 (LNLL…EQLG) and 89 to 110 (HVSQ…EEMN). The 10 X approximate tandem repeats stretch occupies residues 67–264 (LNLLENWDTL…DQITKHVTTQ (198 aa)). Met-109 bears the Methionine sulfoxide mark. One copy of the 3; half-length repeat lies at 111–121 (KDLEKVKKKVQ). 3 repeat units span residues 122-143 (PFLD…HKVE), 144-165 (PLSL…EKLG), and 166-187 (PLGK…SHLR). One copy of the 7; truncated repeat lies at 188–207 (TYTEEMGQILAERLGAIKES). Methionine sulfoxide is present on Met-193. Repeat 8 spans residues 208–229 (TSLAEYQTKASEHLRTFSKKAK). The stretch at 230–240 (PILEDLRQGLL) is one 9; half-length repeat. Residues 241–264 (PVAENFKTNIKNTFDQITKHVTTQ) form repeat 10.

It belongs to the apolipoprotein A1/A4/E family. In terms of assembly, homodimer. Interacts with APOA1BP and CLU. Component of a sperm activating protein complex (SPAP), consisting of APOA1, an immunoglobulin heavy chain, an immunoglobulin light chain and albumin. Interacts with NDRG1. Interacts with SCGB3A2. Interacts with NAXE and YJEFN3. Post-translationally, glycosylated. Palmitoylated. In terms of processing, phosphorylation sites are present in the extracellular medium.

It localises to the secreted. Its function is as follows. Participates in the reverse transport of cholesterol from tissues to the liver for excretion by promoting cholesterol efflux from tissues and by acting as a cofactor for the lecithin cholesterol acyltransferase (LCAT). As part of the SPAP complex, activates spermatozoa motility. The chain is Apolipoprotein A-I (Apoa1) from Fukomys damarensis (Damaraland mole rat).